The chain runs to 546 residues: Chaperonin GroEL 1 (546 aa).

Residues 30 to 33 (TLGP), Lys51, 87 to 91 (DGTTT), Gly415, 479 to 481 (NAA), and Asp495 contribute to the ATP site. Positions 526–546 (KEDAPMPGGMPGGMGGMGMDM) are disordered. Positions 534 to 546 (GMPGGMGGMGMDM) are enriched in gly residues.

It belongs to the chaperonin (HSP60) family. As to quaternary structure, forms a cylinder of 14 subunits composed of two heptameric rings stacked back-to-back. Interacts with the co-chaperonin GroES.

Its subcellular location is the cytoplasm. The enzyme catalyses ATP + H2O + a folded polypeptide = ADP + phosphate + an unfolded polypeptide.. Together with its co-chaperonin GroES, plays an essential role in assisting protein folding. The GroEL-GroES system forms a nano-cage that allows encapsulation of the non-native substrate proteins and provides a physical environment optimized to promote and accelerate protein folding. In Burkholderia ambifaria (strain ATCC BAA-244 / DSM 16087 / CCUG 44356 / LMG 19182 / AMMD) (Burkholderia cepacia (strain AMMD)), this protein is Chaperonin GroEL 1.